We begin with the raw amino-acid sequence, 348 residues long: Alcohol dehydrogenase 1 (348 aa).

Zn(2+) contacts are provided by cysteine 44, histidine 67, cysteine 98, cysteine 101, cysteine 104, cysteine 112, and cysteine 154. Residues glycine 178–glycine 184, aspartate 202, lysine 207, valine 269–leucine 271, and arginine 341 each bind NAD(+).

It belongs to the zinc-containing alcohol dehydrogenase family. In terms of assembly, homotetramer. Zn(2+) serves as cofactor.

It localises to the cytoplasm. It catalyses the reaction a primary alcohol + NAD(+) = an aldehyde + NADH + H(+). The catalysed reaction is a secondary alcohol + NAD(+) = a ketone + NADH + H(+). Its function is as follows. Converts ethanol to acetaldehyde and plays a major role in xylose fermentation. The chain is Alcohol dehydrogenase 1 (ADH1) from Scheffersomyces stipitis (strain ATCC 58785 / CBS 6054 / NBRC 10063 / NRRL Y-11545) (Yeast).